A 718-amino-acid chain; its full sequence is Polyribonucleotide nucleotidyltransferase (718 aa).

Mg(2+)-binding residues include D487 and D493. In terms of domain architecture, KH spans 554-613 (PRIETFKIPTDKIREVIGTGGKVIREIVEKTGAKVNIEDDGTVKVASSDGESIKAAIKWI). Positions 623-691 (GEIYEGTVVK…DRGKTRLSMR (69 aa)) constitute an S1 motif domain. Residues 694–718 (DQETGEDLEAKQKAEGEAPAQATGE) form a disordered region.

Belongs to the polyribonucleotide nucleotidyltransferase family. The cofactor is Mg(2+).

The protein localises to the cytoplasm. The catalysed reaction is RNA(n+1) + phosphate = RNA(n) + a ribonucleoside 5'-diphosphate. In terms of biological role, involved in mRNA degradation. Catalyzes the phosphorolysis of single-stranded polyribonucleotides processively in the 3'- to 5'-direction. This chain is Polyribonucleotide nucleotidyltransferase, found in Rhodopseudomonas palustris (strain HaA2).